We begin with the raw amino-acid sequence, 335 residues long: Ferrochelatase (335 aa).

Residues His207 and Glu288 each contribute to the Fe cation site.

Belongs to the ferrochelatase family.

Its subcellular location is the cytoplasm. The enzyme catalyses heme b + 2 H(+) = protoporphyrin IX + Fe(2+). It participates in porphyrin-containing compound metabolism; protoheme biosynthesis; protoheme from protoporphyrin-IX: step 1/1. In terms of biological role, catalyzes the ferrous insertion into protoporphyrin IX. The sequence is that of Ferrochelatase from Helicobacter pylori (strain J99 / ATCC 700824) (Campylobacter pylori J99).